We begin with the raw amino-acid sequence, 216 residues long: Small ribosomal subunit protein uS3 (216 aa).

One can recognise a KH type-2 domain in the interval 38 to 106 (LRKMLKDKLY…QANIEIKEVR (69 aa)).

This sequence belongs to the universal ribosomal protein uS3 family. Part of the 30S ribosomal subunit. Forms a tight complex with proteins S10 and S14.

Functionally, binds the lower part of the 30S subunit head. Binds mRNA in the 70S ribosome, positioning it for translation. The protein is Small ribosomal subunit protein uS3 of Thermodesulfovibrio yellowstonii (strain ATCC 51303 / DSM 11347 / YP87).